Here is a 926-residue protein sequence, read N- to C-terminus: Staphylococcal nuclease domain-containing protein 1 (926 aa).

The segment covering 1 to 17 has biased composition (low complexity); that stretch reads MATAANTATAAGAAKDA. The segment at 1–24 is disordered; sequence MATAANTATAAGAAKDAPPAPTKS. TNase-like domains lie at 23-167, 195-333, 346-505, and 535-674; these read KSLS…KWSP, NPVK…QWQD, KDFS…LHAK, and LRTE…IWTN. Residues 749–807 enclose the Tudor domain; that stretch reads TPKRGDLVAAQFTLDNQWYRAKVERVQGSNATVLYIDYGNKETLPTNRLAALPPAFSSE. Residues 760–788 are involved in dimethylarginine binding; it reads FTLDNQWYRAKVERVQGSNATVLYIDYGN.

Associates with the RNA-induced silencing complex (RISC). Interacts with the RISC components AGO2, Fmr1 and vig. Interacts with piwi. As to expression, expressed in adult ovaries and testis (at protein level).

It localises to the cytoplasm. It is found in the nucleus. It catalyses the reaction Endonucleolytic cleavage to nucleoside 3'-phosphates and 3'-phosphooligonucleotide end-products.. Functionally, endonuclease which shows activity towards both DNA and RNA substrates. Has a role in translation regulation throught its association with the with the RNA-induced silencing complex (RISC). Plays a role in spermatogenesis probably by negatively regulating piwi expression in the germline. Together with piwi, might be involved in transposon repression in the germline. The chain is Staphylococcal nuclease domain-containing protein 1 from Drosophila melanogaster (Fruit fly).